Reading from the N-terminus, the 51-residue chain is 2,3,4,5-tetrahydropyridine-2,6-dicarboxylate N-succinyltransferase (51 aa).

This sequence belongs to the transferase hexapeptide repeat family. As to quaternary structure, homotrimer.

It localises to the cytoplasm. The enzyme catalyses (S)-2,3,4,5-tetrahydrodipicolinate + succinyl-CoA + H2O = (S)-2-succinylamino-6-oxoheptanedioate + CoA. Its pathway is amino-acid biosynthesis; L-lysine biosynthesis via DAP pathway; LL-2,6-diaminopimelate from (S)-tetrahydrodipicolinate (succinylase route): step 1/3. In Klebsiella oxytoca, this protein is 2,3,4,5-tetrahydropyridine-2,6-dicarboxylate N-succinyltransferase (dapD).